Here is a 279-residue protein sequence, read N- to C-terminus: NH(3)-dependent NAD(+) synthetase (279 aa).

40 to 47 serves as a coordination point for ATP; it reads GLSGGIDS. Aspartate 46 provides a ligand contact to Mg(2+). Residue arginine 122 coordinates deamido-NAD(+). Threonine 142 provides a ligand contact to ATP. A Mg(2+)-binding site is contributed by glutamate 147. Lysine 155 and aspartate 162 together coordinate deamido-NAD(+). Residues lysine 171 and serine 193 each coordinate ATP. 253-254 is a binding site for deamido-NAD(+); sequence HK.

This sequence belongs to the NAD synthetase family. In terms of assembly, homodimer.

The catalysed reaction is deamido-NAD(+) + NH4(+) + ATP = AMP + diphosphate + NAD(+) + H(+). Its pathway is cofactor biosynthesis; NAD(+) biosynthesis; NAD(+) from deamido-NAD(+) (ammonia route): step 1/1. Its function is as follows. Catalyzes the ATP-dependent amidation of deamido-NAD to form NAD. Uses ammonia as a nitrogen source. This Sulfurisphaera tokodaii (strain DSM 16993 / JCM 10545 / NBRC 100140 / 7) (Sulfolobus tokodaii) protein is NH(3)-dependent NAD(+) synthetase.